Here is a 320-residue protein sequence, read N- to C-terminus: Dipeptide transport system permease protein DppC (320 aa).

The next 6 helical transmembrane spans lie at Leu-56–Phe-76, Leu-121–Val-141, Met-154–Met-176, Leu-230–Ala-252, Phe-267–Trp-287, and Leu-289–Gly-309. Residues Ala-117 to Gly-307 form the ABC transmembrane type-1 domain.

Belongs to the binding-protein-dependent transport system permease family. OppBC subfamily.

The protein resides in the cell membrane. Functionally, probably part of the ABC transporter DppBCDE involved in dipeptide transport. Responsible for the translocation of the substrate across the membrane. The polypeptide is Dipeptide transport system permease protein DppC (dppC) (Bacillus subtilis (strain 168)).